Here is a 498-residue protein sequence, read N- to C-terminus: Glycerol kinase (498 aa).

Threonine 12 serves as a coordination point for ADP. Threonine 12, threonine 13, and serine 14 together coordinate ATP. Threonine 12 contacts sn-glycerol 3-phosphate. Position 16 (arginine 16) interacts with ADP. Residues arginine 82, glutamate 83, tyrosine 134, and aspartate 244 each contribute to the sn-glycerol 3-phosphate site. Glycerol-binding residues include arginine 82, glutamate 83, tyrosine 134, aspartate 244, and glutamine 245. Residues threonine 266 and glycine 310 each contribute to the ADP site. Positions 266, 310, 314, and 411 each coordinate ATP. Residues glycine 411 and asparagine 415 each coordinate ADP.

The protein belongs to the FGGY kinase family.

It catalyses the reaction glycerol + ATP = sn-glycerol 3-phosphate + ADP + H(+). The protein operates within polyol metabolism; glycerol degradation via glycerol kinase pathway; sn-glycerol 3-phosphate from glycerol: step 1/1. Inhibited by fructose 1,6-bisphosphate (FBP). In terms of biological role, key enzyme in the regulation of glycerol uptake and metabolism. Catalyzes the phosphorylation of glycerol to yield sn-glycerol 3-phosphate. The protein is Glycerol kinase of Azorhizobium caulinodans (strain ATCC 43989 / DSM 5975 / JCM 20966 / LMG 6465 / NBRC 14845 / NCIMB 13405 / ORS 571).